Reading from the N-terminus, the 293-residue chain is Peptidoglycan deacetylase (293 aa).

Residues Asp14, His86, and His90 each contribute to the Zn(2+) site. Residues 29 to 276 (PDDISRGLFA…INKHEGVRWV (248 aa)) form the NodB homology domain.

The protein belongs to the polysaccharide deacetylase family. Homotetramer.

It catalyses the reaction Deacetylation of xylans and xylo-oligosaccharides.. In terms of biological role, catalyzes the N-deacetylation of peptidoglycan (PG), an important mechanism that appears to confer lysozyme resistance and to mitigate host immune detection; this likely contributes to pathogen persistence in the host. The exact nature of the residue in PG that is deacetylated has not been determined. Is also able to catalyze the deacetylation of acetylated xylan, and, to a lesser extent, that of chitin and chitosan. Therefore, this enzyme might play a role during infection, considering that xylan-containing carbohydrate structures are among those commonly consumed by humans. The polypeptide is Peptidoglycan deacetylase (pgdA) (Helicobacter pylori (strain ATCC 700392 / 26695) (Campylobacter pylori)).